The chain runs to 205 residues: Small ribosomal subunit protein uS4 (205 aa).

Residues 1–46 are disordered; sequence MSKRHSAKYKIDRRMGENLWGRPKSPVNSRSYGPGQHGQRRKSKVS. An S4 RNA-binding domain is found at 94-154; it reads SRLDAIVYRA…EKSRNMALVL (61 aa).

The protein belongs to the universal ribosomal protein uS4 family. Part of the 30S ribosomal subunit. Contacts protein S5. The interaction surface between S4 and S5 is involved in control of translational fidelity.

Functionally, one of the primary rRNA binding proteins, it binds directly to 16S rRNA where it nucleates assembly of the body of the 30S subunit. In terms of biological role, with S5 and S12 plays an important role in translational accuracy. The polypeptide is Small ribosomal subunit protein uS4 (Caulobacter vibrioides (strain ATCC 19089 / CIP 103742 / CB 15) (Caulobacter crescentus)).